The sequence spans 363 residues: tRNA(Met) cytidine acetate ligase (363 aa).

ATP is bound by residues 7–20, G96, N152, and R175; that span reads IAEF…HKYL.

Belongs to the TmcAL family.

Its subcellular location is the cytoplasm. It carries out the reaction cytidine(34) in elongator tRNA(Met) + acetate + ATP = N(4)-acetylcytidine(34) in elongator tRNA(Met) + AMP + diphosphate. Catalyzes the formation of N(4)-acetylcytidine (ac(4)C) at the wobble position of elongator tRNA(Met), using acetate and ATP as substrates. First activates an acetate ion to form acetyladenylate (Ac-AMP) and then transfers the acetyl group to tRNA to form ac(4)C34. The protein is tRNA(Met) cytidine acetate ligase of Streptococcus thermophilus (strain CNRZ 1066).